Here is a 1638-residue protein sequence, read N- to C-terminus: Chromatin-remodeling ATPase INO80 (1638 aa).

Residues 41–93 (SLRKPLSSDEETDDEHVVKREHDVQDSDDSSTVGVVRMKQSSKRKSRLLASKE) are disordered. 2 positions are modified to phosphoserine: S47 and S48. T52 carries the phosphothreonine modification. Over residues 55–65 (EHVVKREHDVQ) the composition is skewed to basic and acidic residues. 2 positions are modified to phosphoserine: S67 and S70. Positions 136-161 (VQQLLREHVREQRQRKNYYKKAANAQ) form a coiled coil. Positions 201–259 (RLAEAQAGPKPPKQRRRGRKKRDNMGSPESGEVPPSELGKYTFGDTLPNNEDDDEDGGE) are disordered. Over residues 212–222 (PKQRRRGRKKR) the composition is skewed to basic residues. 2 positions are modified to phosphoserine: S227 and S230. Residues 250-259 (NEDDDEDGGE) are compositionally biased toward acidic residues. The DBINO domain maps to 313–438 (IWQIMSKKES…AHFMSKKLGQ (126 aa)). Residues 499-528 (KEKEEEEQAQESVEDIKPEPRPEMKDLPQP) form a disordered region. The segment covering 502 to 511 (EEEEQAQESV) has biased composition (acidic residues). The segment covering 512–526 (EDIKPEPRPEMKDLP) has biased composition (basic and acidic residues). The region spanning 547–718 (ANIYDQGISG…WALLHFIMPT (172 aa)) is the Helicase ATP-binding domain. 560-567 (DEMGLGKT) serves as a coordination point for ATP. Residues 1160-1315 (VLDNLLTRLK…GGNFKPDTLK (156 aa)) enclose the Helicase C-terminal domain. 2 disordered regions span residues 1335-1364 (QEAKLQSSSPIPAATQSERKRRHPQKDVNM) and 1463-1638 (FLDD…VGPE). Over residues 1338-1350 (KLQSSSPIPAATQ) the composition is skewed to polar residues. Residues 1473-1495 (MRRRHHPRGTRRGRPRGSTRRGG) are compositionally biased toward basic residues. 2 stretches are compositionally biased toward low complexity: residues 1505 to 1534 (TPTQAATPAVPATASQAAAAGTGAAAGTSS) and 1618 to 1627 (SPATSRAPSP).

The protein belongs to the SNF2/RAD54 helicase family. As to quaternary structure, component of the chromatin remodeling Ino80 complex.

Its subcellular location is the nucleus. It carries out the reaction ATP + H2O = ADP + phosphate + H(+). ATPase component of the chromatin remodeling INO80 complex which is involved in transcriptional regulation, DNA replication and DNA repair. Binds DNA. As part of the INO80 complex, remodels chromatin by shifting nucleosomes. The polypeptide is Chromatin-remodeling ATPase INO80 (Drosophila melanogaster (Fruit fly)).